The primary structure comprises 349 residues: Glycerol-3-phosphate dehydrogenase [NAD(P)+] (349 aa).

NADPH-binding residues include Trp20, Arg43, Arg44, and Lys117. Residues Lys117 and Gly147 each contribute to the sn-glycerol 3-phosphate site. An NADPH-binding site is contributed by Ala151. Sn-glycerol 3-phosphate is bound by residues Lys202, Asp255, Ser265, Arg266, and Asn267. The active-site Proton acceptor is Lys202. Arg266 is an NADPH binding site. Residues Val297 and Glu299 each contribute to the NADPH site.

The protein belongs to the NAD-dependent glycerol-3-phosphate dehydrogenase family.

The protein resides in the cytoplasm. It carries out the reaction sn-glycerol 3-phosphate + NAD(+) = dihydroxyacetone phosphate + NADH + H(+). It catalyses the reaction sn-glycerol 3-phosphate + NADP(+) = dihydroxyacetone phosphate + NADPH + H(+). It participates in membrane lipid metabolism; glycerophospholipid metabolism. Catalyzes the reduction of the glycolytic intermediate dihydroxyacetone phosphate (DHAP) to sn-glycerol 3-phosphate (G3P), the key precursor for phospholipid synthesis. This chain is Glycerol-3-phosphate dehydrogenase [NAD(P)+], found in Mycobacterium leprae (strain TN).